Consider the following 369-residue polypeptide: MKRKAKTIIAGIVALAVSQGAMADDIKVAIVGAMSGPVAQWGDMEFNGARQAIKDINAKGGIKGDKLVGVEYDDACDPKQAVAVANKIVNDGIQYVIGHLCSSSTQPASDIYEDEGILMISPGATNPELTQRGYQYIMRTAGLDSSQGPTAAKYILETVKPQRIAIIHDKQQYGEGLARSVQDGLKQGNANIVFFDGITAGEKDFSALIARLQKENIDFVYYGGYYPEMGQMLRQARANGLKTQFMGPEGVGNASLSNIAGGAAEGMLVTMPKRYDQDPANKAIVEALKADKKDPSGPYVWITYAAVQSLATAMTRSASHAPLDLVKDLKANGADTVIGPLKWDEKGDLKGFEFGVFQWHADGSSTVAK.

The signal sequence occupies residues M1–A23. Residues C76 and C101 are joined by a disulfide bond.

The protein belongs to the leucine-binding protein family.

The protein resides in the periplasm. Functionally, this protein is a component of the leucine-specific transport system, which is one of the two periplasmic binding protein-dependent transport systems of the high-affinity transport of the branched-chain amino acids. The chain is Leucine-specific-binding protein (livK) from Salmonella typhi.